The primary structure comprises 91 residues: Small ribosomal subunit protein uS19 (91 aa).

It belongs to the universal ribosomal protein uS19 family.

In terms of biological role, protein S19 forms a complex with S13 that binds strongly to the 16S ribosomal RNA. The polypeptide is Small ribosomal subunit protein uS19 (Afipia carboxidovorans (strain ATCC 49405 / DSM 1227 / KCTC 32145 / OM5) (Oligotropha carboxidovorans)).